The primary structure comprises 720 residues: Engulfment and cell motility protein 2 (720 aa).

Position 48 is a phosphotyrosine (Tyr-48). The ELMO domain maps to 310–484; the sequence is QAQRDIIFEL…QVVREQITRA (175 aa). A Phosphoserine modification is found at Ser-503. One can recognise a PH domain in the interval 553-674; that stretch reads SSFRKIGNRR…LLGKDMSSEL (122 aa). An SH3-binding motif is present at residues 700–707; sequence PEAPPPVP. A Phosphotyrosine modification is found at Tyr-717.

As to quaternary structure, interacts directly with the SH3-domain of DOCK1 via its SH3-binding site. Probably forms a heterotrimeric complex with DOCK1 and RAC1. Interacts with ARHGEF16, DOCK4 and EPHA2; mediates activation of RAC1 by EPHA2. Interacts with ADGRB3. Interacts with AUTS2; the interaction is direct.

Its subcellular location is the cytoplasm. The protein resides in the cytosol. It is found in the membrane. Involved in cytoskeletal rearrangements required for phagocytosis of apoptotic cells and cell motility. Acts in association with DOCK1 and CRK. Was initially proposed to be required in complex with DOCK1 to activate Rac Rho small GTPases. May enhance the guanine nucleotide exchange factor (GEF) activity of DOCK1. The sequence is that of Engulfment and cell motility protein 2 (ELMO2) from Bos taurus (Bovine).